The primary structure comprises 411 residues: Growth-regulating factor 7 (411 aa).

In terms of domain architecture, QLQ spans 38–73; sequence PFTPTQWMELEHQALIYKHIVANAPVPAGLLLPIRR. The 45-residue stretch at 108-152 folds into the WRC domain; sequence DSEPGRCRRTDGKKWRCSRDAVVDQKYCERHINRGRHRSRKHVEG. 2 short sequence motifs (bipartite nuclear localization signal) span residues 113 to 123 and 141 to 148; these read RCRRTDGKKWR and RGRHRSRK. A disordered region spans residues 333-369; it reads FFTNTSSASDDKGKSRHPPSLNLLADGHTTSPQLQSP. Polar residues predominate over residues 360 to 369; it reads HTTSPQLQSP.

This sequence belongs to the GRF family.

It localises to the nucleus. Functionally, transcription activator that plays a regulatory role in gibberellin-induced stem elongation. The sequence is that of Growth-regulating factor 7 (GRF7) from Oryza sativa subsp. japonica (Rice).